Consider the following 302-residue polypeptide: Glycine--tRNA ligase alpha subunit (302 aa).

This sequence belongs to the class-II aminoacyl-tRNA synthetase family. In terms of assembly, tetramer of two alpha and two beta subunits.

It localises to the cytoplasm. It catalyses the reaction tRNA(Gly) + glycine + ATP = glycyl-tRNA(Gly) + AMP + diphosphate. The sequence is that of Glycine--tRNA ligase alpha subunit (glyQ) from Haemophilus influenzae (strain ATCC 51907 / DSM 11121 / KW20 / Rd).